We begin with the raw amino-acid sequence, 206 residues long: Small ribosomal subunit protein uS4 (206 aa).

Residues 96–156 (GRLDNVVYRM…EKSKKQARIK (61 aa)) form the S4 RNA-binding domain.

The protein belongs to the universal ribosomal protein uS4 family. As to quaternary structure, part of the 30S ribosomal subunit. Contacts protein S5. The interaction surface between S4 and S5 is involved in control of translational fidelity.

One of the primary rRNA binding proteins, it binds directly to 16S rRNA where it nucleates assembly of the body of the 30S subunit. In terms of biological role, with S5 and S12 plays an important role in translational accuracy. In Pasteurella multocida (strain Pm70), this protein is Small ribosomal subunit protein uS4.